A 410-amino-acid polypeptide reads, in one-letter code: Exodeoxyribonuclease 7 large subunit (410 aa).

The protein belongs to the XseA family. Heterooligomer composed of large and small subunits.

The protein resides in the cytoplasm. It carries out the reaction Exonucleolytic cleavage in either 5'- to 3'- or 3'- to 5'-direction to yield nucleoside 5'-phosphates.. Bidirectionally degrades single-stranded DNA into large acid-insoluble oligonucleotides, which are then degraded further into small acid-soluble oligonucleotides. This chain is Exodeoxyribonuclease 7 large subunit, found in Alkaliphilus metalliredigens (strain QYMF).